A 167-amino-acid polypeptide reads, in one-letter code: Crossover junction endodeoxyribonuclease RuvC (167 aa).

Catalysis depends on residues aspartate 7, glutamate 67, and aspartate 139. Positions 7, 67, and 139 each coordinate Mg(2+).

It belongs to the RuvC family. Homodimer which binds Holliday junction (HJ) DNA. The HJ becomes 2-fold symmetrical on binding to RuvC with unstacked arms; it has a different conformation from HJ DNA in complex with RuvA. In the full resolvosome a probable DNA-RuvA(4)-RuvB(12)-RuvC(2) complex forms which resolves the HJ. Mg(2+) serves as cofactor.

It localises to the cytoplasm. It carries out the reaction Endonucleolytic cleavage at a junction such as a reciprocal single-stranded crossover between two homologous DNA duplexes (Holliday junction).. Functionally, the RuvA-RuvB-RuvC complex processes Holliday junction (HJ) DNA during genetic recombination and DNA repair. Endonuclease that resolves HJ intermediates. Cleaves cruciform DNA by making single-stranded nicks across the HJ at symmetrical positions within the homologous arms, yielding a 5'-phosphate and a 3'-hydroxyl group; requires a central core of homology in the junction. The consensus cleavage sequence is 5'-(A/T)TT(C/G)-3'. Cleavage occurs on the 3'-side of the TT dinucleotide at the point of strand exchange. HJ branch migration catalyzed by RuvA-RuvB allows RuvC to scan DNA until it finds its consensus sequence, where it cleaves and resolves the cruciform DNA. The chain is Crossover junction endodeoxyribonuclease RuvC from Akkermansia muciniphila (strain ATCC BAA-835 / DSM 22959 / JCM 33894 / BCRC 81048 / CCUG 64013 / CIP 107961 / Muc).